Reading from the N-terminus, the 298-residue chain is Tyrosine recombinase XerC (298 aa).

The 85-residue stretch at 1–85 (MQQQLDAYCA…AVRGLYHYLN (85 aa)) folds into the Core-binding (CB) domain. The Tyr recombinase domain maps to 106–285 (RLPKTLDTDR…DFQHLAAVYD (180 aa)). Active-site residues include Arg-146, Lys-170, His-237, Arg-240, and His-263. Tyr-272 acts as the O-(3'-phospho-DNA)-tyrosine intermediate in catalysis.

This sequence belongs to the 'phage' integrase family. XerC subfamily. Forms a cyclic heterotetrameric complex composed of two molecules of XerC and two molecules of XerD.

It localises to the cytoplasm. In terms of biological role, site-specific tyrosine recombinase, which acts by catalyzing the cutting and rejoining of the recombining DNA molecules. The XerC-XerD complex is essential to convert dimers of the bacterial chromosome into monomers to permit their segregation at cell division. It also contributes to the segregational stability of plasmids. This Pseudomonas fluorescens (strain ATCC BAA-477 / NRRL B-23932 / Pf-5) protein is Tyrosine recombinase XerC.